An 846-amino-acid chain; its full sequence is Translation initiation factor IF-2 (846 aa).

A tr-type G domain is found at 345-512; that stretch reads SRAPVVTIMG…AVLLQSEVLE (168 aa). Positions 354–361 are G1; the sequence is GHVDHGKT. Position 354 to 361 (354 to 361) interacts with GTP; sequence GHVDHGKT. Residues 379-383 are G2; that stretch reads GITQH. The segment at 400–403 is G3; it reads DTPG. Residues 400 to 404 and 454 to 457 contribute to the GTP site; these read DTPGH and NKID. The G4 stretch occupies residues 454-457; sequence NKID. Residues 490-492 are G5; it reads SAK.

It belongs to the TRAFAC class translation factor GTPase superfamily. Classic translation factor GTPase family. IF-2 subfamily.

It localises to the cytoplasm. One of the essential components for the initiation of protein synthesis. Protects formylmethionyl-tRNA from spontaneous hydrolysis and promotes its binding to the 30S ribosomal subunits. Also involved in the hydrolysis of GTP during the formation of the 70S ribosomal complex. This chain is Translation initiation factor IF-2, found in Francisella tularensis subsp. holarctica (strain FTNF002-00 / FTA).